A 1381-amino-acid chain; its full sequence is DNA-directed RNA polymerase subunit beta'' (1381 aa).

Zn(2+)-binding residues include Cys220, Cys293, Cys300, and Cys303.

It belongs to the RNA polymerase beta' chain family. RpoC2 subfamily. In plastids the minimal PEP RNA polymerase catalytic core is composed of four subunits: alpha, beta, beta', and beta''. When a (nuclear-encoded) sigma factor is associated with the core the holoenzyme is formed, which can initiate transcription. The cofactor is Zn(2+).

The protein localises to the plastid. The protein resides in the chloroplast. It catalyses the reaction RNA(n) + a ribonucleoside 5'-triphosphate = RNA(n+1) + diphosphate. In terms of biological role, DNA-dependent RNA polymerase catalyzes the transcription of DNA into RNA using the four ribonucleoside triphosphates as substrates. This is DNA-directed RNA polymerase subunit beta'' from Draba nemorosa (Woodland whitlowgrass).